The sequence spans 420 residues: Serine hydroxymethyltransferase (420 aa).

Residues leucine 121 and glycine 125 to leucine 127 each bind (6S)-5,6,7,8-tetrahydrofolate. Lysine 229 carries the post-translational modification N6-(pyridoxal phosphate)lysine.

Belongs to the SHMT family. Homodimer. Pyridoxal 5'-phosphate serves as cofactor.

Its subcellular location is the cytoplasm. The catalysed reaction is (6R)-5,10-methylene-5,6,7,8-tetrahydrofolate + glycine + H2O = (6S)-5,6,7,8-tetrahydrofolate + L-serine. It participates in one-carbon metabolism; tetrahydrofolate interconversion. Its pathway is amino-acid biosynthesis; glycine biosynthesis; glycine from L-serine: step 1/1. Its function is as follows. Catalyzes the reversible interconversion of serine and glycine with tetrahydrofolate (THF) serving as the one-carbon carrier. This reaction serves as the major source of one-carbon groups required for the biosynthesis of purines, thymidylate, methionine, and other important biomolecules. Also exhibits THF-independent aldolase activity toward beta-hydroxyamino acids, producing glycine and aldehydes, via a retro-aldol mechanism. In Wigglesworthia glossinidia brevipalpis, this protein is Serine hydroxymethyltransferase.